The chain runs to 875 residues: Alanine--tRNA ligase (875 aa).

Residues H564, H568, C666, and H670 each coordinate Zn(2+).

The protein belongs to the class-II aminoacyl-tRNA synthetase family. In terms of assembly, homotetramer. The cofactor is Zn(2+).

The protein localises to the cytoplasm. It catalyses the reaction tRNA(Ala) + L-alanine + ATP = L-alanyl-tRNA(Ala) + AMP + diphosphate. In terms of biological role, catalyzes the attachment of alanine to tRNA(Ala) in a two-step reaction: alanine is first activated by ATP to form Ala-AMP and then transferred to the acceptor end of tRNA(Ala). Also edits incorrectly charged Ser-tRNA(Ala) and Gly-tRNA(Ala) via its editing domain. The sequence is that of Alanine--tRNA ligase from Yersinia pestis bv. Antiqua (strain Angola).